Consider the following 280-residue polypeptide: Homeobox protein Hox-B1b (280 aa).

Residues 46–65 (GRLAAPTSAPHQSPGLPLHH) are disordered. The Antp-type hexapeptide signature appears at 170 to 175 (TFDWMK). Positions 195-254 (HNVIRTNFTTKQLTELEKEFHFNKYLTRARRVEVAASLELNETQVKIWFQNRRMKQKKRE) form a DNA-binding region, homeobox. The segment at 249 to 280 (KQKKREKLGGVLVHREKASGPESSPKAKESEP) is disordered. The segment covering 261–280 (VHREKASGPESSPKAKESEP) has biased composition (basic and acidic residues).

The protein belongs to the Antp homeobox family. Labial subfamily.

It is found in the nucleus. In terms of biological role, sequence-specific transcription factor which is part of a developmental regulatory system that provides cells with specific positional identities on the anterior-posterior axis. This is Homeobox protein Hox-B1b (hoxb1b) from Takifugu rubripes (Japanese pufferfish).